Reading from the N-terminus, the 442-residue chain is Syndecan-3 (442 aa).

2 disordered regions span residues 1–25 and 55–85; these read MKPG…GPGA and RPVD…SGYF. Positions 1-44 are cleaved as a signal peptide; the sequence is MKPGPPRRGTAQGQRVDTATHGPGARGLLLPPLLLLLLAGRAAG. Over 45–387 the chain is Extracellular; the sequence is AQRWRNENFE…SILERKEVLV (343 aa). The span at 61 to 75 shows a compositional bias: acidic residues; the sequence is GSGDDDSFPDDELDD. Serine 78, serine 80, serine 82, and serine 89 each carry an O-linked (Xyl...) (glycosaminoglycan) serine glycan. O-linked (GalNAc) threonine; by GALNT13 glycosylation is present at threonine 107. 5 disordered regions span residues 151-175, 180-199, 225-244, 252-327, and 339-372; these read EEPS…TGAP, APAT…PATA, ATTP…DTEA, TATS…TTQP, and AAAK…SSAA. Residues 157–175 are compositionally biased toward low complexity; sequence ATTISTTTSTTAATTTGAP. An O-linked (GalNAc) serine; by GALNT13 glycan is attached at serine 161. O-linked (GalNAc) threonine; by GALNT13 glycans are attached at residues threonine 162, threonine 163, threonine 170, and threonine 172. The segment covering 276–287 has biased composition (low complexity); that stretch reads TLPLGTTAPGPT. A compositionally biased stretch (polar residues) spans 289–303; it reads VAQTPTPESLLTTTQ. O-linked (Xyl...) (glycosaminoglycan) serine glycosylation is found at serine 315 and serine 367. Residues 388–408 traverse the membrane as a helical segment; the sequence is AVIVGGVVGALFAAFLVTLLI. Residues tyrosine 409, tyrosine 419, tyrosine 431, and tyrosine 441 each carry the phosphotyrosine modification. Residues 409–442 lie on the Cytoplasmic side of the membrane; it reads YRMKKKDEGSYTLEEPKQASVTYQKPDKQEEFYA. A disordered region spans residues 419-442; that stretch reads YTLEEPKQASVTYQKPDKQEEFYA. The segment covering 433–442 has biased composition (basic and acidic residues); that stretch reads KPDKQEEFYA.

Belongs to the syndecan proteoglycan family. As to quaternary structure, interacts with TIAM1. Interacts (via heparan sulfate chains) with PTN; this interaction mediates the neurite outgrowth-promoting signal from PTN to the cytoskeleton of growing neurites; this interaction mediates osteoblast recruitment. Interacts with MDK; this interaction induces SDC3 clustering; this interaction induces neuronal cell adhesion and neurite outgrowth. In terms of processing, O-glycosylated within the Thr/Ser-rich region which could interact with lectin domains on other molecules. As to expression, high levels in neonatal brain, heart, and Schwann cells, barely detectable in neonatal or adult liver, or adult brain.

It is found in the cell membrane. Cell surface proteoglycan that may bear heparan sulfate. May have a role in the organization of cell shape by affecting the actin cytoskeleton, possibly by transferring signals from the cell surface in a sugar-dependent mechanism. The protein is Syndecan-3 (Sdc3) of Rattus norvegicus (Rat).